Consider the following 539-residue polypeptide: Phenylalanine--tRNA ligase beta subunit (539 aa).

Residues leucine 271–alanine 347 enclose the B5 domain. Mg(2+) is bound by residues aspartate 325, aspartate 331, glutamate 334, and aspartate 335.

It belongs to the phenylalanyl-tRNA synthetase beta subunit family. Type 2 subfamily. Tetramer of two alpha and two beta subunits. It depends on Mg(2+) as a cofactor.

It is found in the cytoplasm. The catalysed reaction is tRNA(Phe) + L-phenylalanine + ATP = L-phenylalanyl-tRNA(Phe) + AMP + diphosphate + H(+). The chain is Phenylalanine--tRNA ligase beta subunit from Methanothrix thermoacetophila (strain DSM 6194 / JCM 14653 / NBRC 101360 / PT) (Methanosaeta thermophila).